The chain runs to 955 residues: Kinesin heavy chain isoform 5C (955 aa).

The 320-residue stretch at 8-327 folds into the Kinesin motor domain; the sequence is SIKVMCRFRP…LMFGQRAKTI (320 aa). Positions 87, 89, 90, 91, 92, 93, 94, and 99 each coordinate ATP. Positions 174-315 are microtubule-binding; it reads VSSPEEVMDV…PSVFNEAETK (142 aa). Positions 332 to 366 form a coiled coil; it reads SVNLELTAEEWKKKYEKEKEKNKALKSVIQHLEVE. A Phosphothreonine modification is found at threonine 403. Coiled coils occupy residues 413 to 538 and 590 to 913; these read KEKY…LQEL and ISKM…KNMA. Residues 859–955 are globular; that stretch reads CELPKLEKRL…GSSNSTHYQK (97 aa). Residues 909–955 form a disordered region; the sequence is AKNMARRAHSAQIAKPIRPGHYPASSPTAVHAVRGGGGSSNSTHYQK.

This sequence belongs to the TRAFAC class myosin-kinesin ATPase superfamily. Kinesin family. Kinesin subfamily. In terms of assembly, oligomer composed of two heavy chains and two light chains. Interacts with GRIP1. Interacts with TRAK1. Interacts with ZFYVE27. Interacts with KLC3.

Its subcellular location is the cytoplasm. It is found in the cytoskeleton. The protein localises to the cell projection. The protein resides in the dendrite. It catalyses the reaction ATP + H2O = ADP + phosphate + H(+). Its function is as follows. Microtubule-associated force-producing protein that may play a role in organelle transport. Has ATPase activity. Involved in synaptic transmission. Mediates dendritic trafficking of mRNAs. Required for anterograde axonal transportation of MAPK8IP3/JIP3 which is essential for MAPK8IP3/JIP3 function in axon elongation. The polypeptide is Kinesin heavy chain isoform 5C (Kif5c) (Rattus norvegicus (Rat)).